The sequence spans 512 residues: MKIRSQVGMVLNLDKCIGCHTCSVTCKNVWTSREGVEYAWFNNVETKPGQGFPTDWENQEKYKGGWIRKINGKLQPRMGNRAMLLGKIFANPHLPGIDDYYEPFDFDYQNLHTAPEGSKSQPIARPRSLITGERMAKIEKGPNWEDDLGGEFDKLAKDKNFDNIQKAMYSQFENTFMMYLPRLCEHCLNPACVATCPSGAIYKREEDGIVLIDQDKCRGWRMCITGCPYKKIYFNWKSGKSEKCIFCYPRIEAGQPTVCSETCVGRIRYLGVLLYDADAIERAASTENEKDLYQRQLDVFLDPNDPKVIEQAIKDGIPLSVIEAAQQSPVYKMAMEWKLALPLHPEYRTLPMVWYVPPLSPIQSAADAGELGSNGILPDVESLRIPVQYLANLLTAGDTKPVLRALKRMLAMRHYKRAETVDGKVDTRALEEVGLTEAQAQEMYRYLAIANYEDRFVVPSSHRELAREAFPEKNGCGFTFGDGCHGSDTKFNLFNSRRIDAIDVTSKTEPHP.

3 consecutive 4Fe-4S ferredoxin-type domains span residues 7 to 35 (VGMVLNLDKCIGCHTCSVTCKNVWTSREG), 175 to 206 (TFMMYLPRLCEHCLNPACVATCPSGAIYKREE), and 208 to 237 (GIVLIDQDKCRGWRMCITGCPYKKIYFNWK). [4Fe-4S] cluster is bound by residues Cys-16, Cys-19, Cys-22, Cys-26, Cys-184, Cys-187, and Cys-192. [3Fe-4S] cluster-binding residues include Cys-196, Cys-217, and Cys-223. Positions 227, 244, 247, 259, and 263 each coordinate [4Fe-4S] cluster.

In terms of assembly, dimer of heterotrimers each composed of an alpha, a beta and a gamma chain. Alpha and beta are catalytic chains; gamma chains are involved in binding the enzyme complex to the cytoplasmic membrane. [4Fe-4S] cluster serves as cofactor. The cofactor is [3Fe-4S] cluster.

The protein resides in the cell membrane. The enzyme catalyses nitrate + a quinol = a quinone + nitrite + H2O. Functionally, the nitrate reductase enzyme complex allows E.coli to use nitrate as an electron acceptor during anaerobic growth. The beta chain is an electron transfer unit containing four cysteine clusters involved in the formation of iron-sulfur centers. Electrons are transferred from the gamma chain to the molybdenum cofactor of the alpha subunit. This is Respiratory nitrate reductase 1 beta chain (narH) from Escherichia coli (strain K12).